We begin with the raw amino-acid sequence, 162 residues long: Ribosome maturation factor RimP (162 aa).

It belongs to the RimP family.

It is found in the cytoplasm. Required for maturation of 30S ribosomal subunits. This chain is Ribosome maturation factor RimP, found in Streptococcus gordonii (strain Challis / ATCC 35105 / BCRC 15272 / CH1 / DL1 / V288).